Reading from the N-terminus, the 59-residue chain is UPF0181 protein YoaH (59 aa).

The protein belongs to the UPF0181 family.

This Escherichia coli O127:H6 (strain E2348/69 / EPEC) protein is UPF0181 protein YoaH.